The sequence spans 389 residues: Jasmonate O-methyltransferase (389 aa).

S-adenosyl-L-homocysteine is bound at residue Tyr-18. Gln-25 provides a ligand contact to jasmonate. S-adenosyl-L-homocysteine-binding residues include Cys-60, Asn-65, Asp-97, Leu-98, Ser-142, and Phe-143. The jasmonate site is built by His-163 and Trp-164. Mg(2+)-binding residues include Asn-186, Asp-272, Phe-274, and Asn-275.

It belongs to the methyltransferase superfamily. Type-7 methyltransferase family. The cofactor is Mg(2+). As to expression, expressed in rosettes, cauline leaves and developing flowers but not in young seedlings.

Its subcellular location is the cytoplasm. The protein localises to the nucleus. The enzyme catalyses jasmonate + S-adenosyl-L-methionine = methyl (-)-jasmonate + S-adenosyl-L-homocysteine. It participates in lipid metabolism; oxylipin biosynthesis. In terms of biological role, catalyzes the methylation of jasmonate into methyljasmonate, a plant volatile that acts as an important cellular regulator mediating diverse developmental processes and defense responses. The chain is Jasmonate O-methyltransferase from Arabidopsis thaliana (Mouse-ear cress).